Reading from the N-terminus, the 447-residue chain is UDP-N-acetylmuramate--L-alanine ligase (447 aa).

115–121 (GAHGKTS) provides a ligand contact to ATP.

The protein belongs to the MurCDEF family.

Its subcellular location is the cytoplasm. The enzyme catalyses UDP-N-acetyl-alpha-D-muramate + L-alanine + ATP = UDP-N-acetyl-alpha-D-muramoyl-L-alanine + ADP + phosphate + H(+). Its pathway is cell wall biogenesis; peptidoglycan biosynthesis. Functionally, cell wall formation. This Streptococcus thermophilus (strain CNRZ 1066) protein is UDP-N-acetylmuramate--L-alanine ligase.